Here is a 21-residue protein sequence, read N- to C-terminus: Basic phospholipase A2 BjIV (21 aa).

Belongs to the phospholipase A2 family. Group II subfamily. As to quaternary structure, can form dimers, trimers and tetramers. It depends on Ca(2+) as a cofactor. Contains seven disulfide bonds. As to expression, expressed by the venom gland.

The protein resides in the secreted. The catalysed reaction is a 1,2-diacyl-sn-glycero-3-phosphocholine + H2O = a 1-acyl-sn-glycero-3-phosphocholine + a fatty acid + H(+). With respect to regulation, inhibited by crotapotin. Snake venom phospholipase A2 has a high enzymatic activity and produces moderate myonecrosis in skeletal muscle, but shows no neuromuscular activity in mouse phrenic nerve-diaphragm preparations. PLA2 catalyzes the calcium-dependent hydrolysis of the 2-acyl groups in 3-sn-phosphoglycerides. This chain is Basic phospholipase A2 BjIV, found in Bothrops jararacussu (Jararacussu).